The primary structure comprises 200 residues: Dephospho-CoA kinase (200 aa).

The DPCK domain maps to 3-200; sequence IFGLTGGIGS…LNVNNKCNMD (198 aa). An ATP-binding site is contributed by 11–16; sequence GSGKSL.

This sequence belongs to the CoaE family.

It localises to the cytoplasm. It catalyses the reaction 3'-dephospho-CoA + ATP = ADP + CoA + H(+). The protein operates within cofactor biosynthesis; coenzyme A biosynthesis; CoA from (R)-pantothenate: step 5/5. In terms of biological role, catalyzes the phosphorylation of the 3'-hydroxyl group of dephosphocoenzyme A to form coenzyme A. This chain is Dephospho-CoA kinase, found in Ehrlichia canis (strain Jake).